Here is a 132-residue protein sequence, read N- to C-terminus: AP-2 complex subunit sigma (132 aa).

Belongs to the adaptor complexes small subunit family. Adaptor protein complex 2 (AP-2) is a heterotetramer composed of two large adaptins (alpha-type and beta-type subunits), a medium adaptin (mu-type subunit AP50) and a small adaptin (sigma-type subunit AP17). As to expression, widely expressed in the embryo, endosperm, leaf and root.

The protein localises to the cell membrane. It is found in the membrane. The protein resides in the coated pit. Functionally, component of the adaptor complexes which link clathrin to receptors in coated vesicles. Clathrin-associated protein complexes are believed to interact with the cytoplasmic tails of membrane proteins, leading to their selection and concentration. AP2S1/AP17 is a subunit of the plasma membrane adaptor. The complex binds polyphosphoinositides. The protein is AP-2 complex subunit sigma (AP-17) of Zea mays (Maize).